We begin with the raw amino-acid sequence, 527 residues long: Peptide chain release factor 3 (527 aa).

The 269-residue stretch at Ala9–Leu277 folds into the tr-type G domain. GTP-binding positions include Ser18 to Thr25, Asp86 to His90, and Asn140 to Asp143.

It belongs to the TRAFAC class translation factor GTPase superfamily. Classic translation factor GTPase family. PrfC subfamily.

Its subcellular location is the cytoplasm. Its function is as follows. Increases the formation of ribosomal termination complexes and stimulates activities of RF-1 and RF-2. It binds guanine nucleotides and has strong preference for UGA stop codons. It may interact directly with the ribosome. The stimulation of RF-1 and RF-2 is significantly reduced by GTP and GDP, but not by GMP. The protein is Peptide chain release factor 3 of Pseudomonas syringae pv. tomato (strain ATCC BAA-871 / DC3000).